The primary structure comprises 361 residues: UDP-D-xylose:L-fucose alpha-1,3-D-xylosyltransferase 1 (361 aa).

The disordered stretch occupies residues 1 to 21 (MEQKQHILKQSTFSSSPSSYS). Topologically, residues 1–34 (MEQKQHILKQSTFSSSPSSYSSISDRPISLLSRN) are cytoplasmic. Over residues 11 to 21 (STFSSSPSSYS) the composition is skewed to low complexity. The chain crosses the membrane as a helical; Signal-anchor for type II membrane protein span at residues 35–55 (GLLLLLLALVLLLGVLLPWPG). Residues 56-361 (SPLFLFPNRL…ALESPLGKLE (306 aa)) lie on the Lumenal side of the membrane. Residues Asn92 and Asn167 are each glycosylated (N-linked (GlcNAc...) asparagine). The short motif at 190–192 (DVD) is the DXD motif element. 2 N-linked (GlcNAc...) asparagine glycosylation sites follow: Asn222 and Asn286.

The protein belongs to the glycosyltransferase 77 family. Requires Mn(2+) as cofactor. It depends on Mg(2+) as a cofactor. In terms of processing, glycosylated. Expressed in roots, rosette leaves, cauline leaves and stems.

Its subcellular location is the golgi apparatus membrane. In terms of biological role, catalyzes the transfer of D-xylose from UDP-alpha-D-xylose onto L-fucose. Probably involved in the biosynthesis of rhamnogalacturonan II (RG-II) through xylosylation of the internal fucose moiety of the A-chain of RG-II, a structurally complex pectic polysaccharide of the primary cell wall. RG-II is essential for the cell wall integrity of rapidly growing tissues such as roots and pollen tube growth and elongation. This is UDP-D-xylose:L-fucose alpha-1,3-D-xylosyltransferase 1 from Arabidopsis thaliana (Mouse-ear cress).